Consider the following 153-residue polypeptide: MAREKVLELVKRVTLPVVQEAGLELVDVEYAKEGGRYYLRIFIDKPGGVRIEDCQHVSEKIDRLLDELDPIPQSYFLEVSSPGIDRPLKKAGDYIRFAGRLARVKTFSPVEGRRKFTGRIVGMHGEDVVMQVEGKEMSIPFKQIASARLEVEF.

The protein belongs to the RimP family.

It is found in the cytoplasm. In terms of biological role, required for maturation of 30S ribosomal subunits. This chain is Ribosome maturation factor RimP, found in Pelotomaculum thermopropionicum (strain DSM 13744 / JCM 10971 / SI).